The following is a 275-amino-acid chain: Formamidopyrimidine-DNA glycosylase (275 aa).

Catalysis depends on P2, which acts as the Schiff-base intermediate with DNA. The active-site Proton donor is the E3. Catalysis depends on K58, which acts as the Proton donor; for beta-elimination activity. DNA contacts are provided by H91, R109, and R154. The segment at 240 to 274 (AVYERAGLPCRVCGAPIRRLVQGQRATYFCPSCQK) adopts an FPG-type zinc-finger fold. Catalysis depends on R264, which acts as the Proton donor; for delta-elimination activity.

This sequence belongs to the FPG family. In terms of assembly, monomer. Zn(2+) is required as a cofactor.

It carries out the reaction Hydrolysis of DNA containing ring-opened 7-methylguanine residues, releasing 2,6-diamino-4-hydroxy-5-(N-methyl)formamidopyrimidine.. The enzyme catalyses 2'-deoxyribonucleotide-(2'-deoxyribose 5'-phosphate)-2'-deoxyribonucleotide-DNA = a 3'-end 2'-deoxyribonucleotide-(2,3-dehydro-2,3-deoxyribose 5'-phosphate)-DNA + a 5'-end 5'-phospho-2'-deoxyribonucleoside-DNA + H(+). Its function is as follows. Involved in base excision repair of DNA damaged by oxidation or by mutagenic agents. Acts as a DNA glycosylase that recognizes and removes damaged bases. Has a preference for oxidized purines, such as 7,8-dihydro-8-oxoguanine (8-oxoG). Has AP (apurinic/apyrimidinic) lyase activity and introduces nicks in the DNA strand. Cleaves the DNA backbone by beta-delta elimination to generate a single-strand break at the site of the removed base with both 3'- and 5'-phosphates. The sequence is that of Formamidopyrimidine-DNA glycosylase from Bordetella parapertussis (strain 12822 / ATCC BAA-587 / NCTC 13253).